The primary structure comprises 272 residues: Orotidine 5'-phosphate decarboxylase (272 aa).

Catalysis depends on Lys-96, which acts as the Proton donor.

Belongs to the OMP decarboxylase family. Type 2 subfamily.

The enzyme catalyses orotidine 5'-phosphate + H(+) = UMP + CO2. The protein operates within pyrimidine metabolism; UMP biosynthesis via de novo pathway; UMP from orotate: step 2/2. This Christiangramia forsetii (strain DSM 17595 / CGMCC 1.15422 / KT0803) (Gramella forsetii) protein is Orotidine 5'-phosphate decarboxylase.